The chain runs to 141 residues: Cystatin (141 aa).

An N-terminal signal peptide occupies residues 1 to 26; it reads MVHSQLPVAASLRLLCALLLLPSATM. One can recognise a Cystatin domain in the interval 29–129; sequence GGLSPRSVTD…CRFQVWSRPW (101 aa). Positions 73-77 match the Secondary area of contact motif; that stretch reads QVVAG. Intrachain disulfides connect C91–C107 and C120–C140.

It belongs to the cystatin family. In terms of tissue distribution, expressed by the venom gland at an extremely low level (at protein level).

It localises to the secreted. Its function is as follows. Inhibits various C1 cysteine proteases including cathepsin L, papain and cathepsin B. This protein has no toxic activity and its function in the venom is unknown. It may play a role as a housekeeping or regulatory protein. The sequence is that of Cystatin from Cryptophis nigrescens (Eastern small-eyed snake).